The primary structure comprises 1040 residues: Multidrug resistance protein MdtB (1040 aa).

12 helical membrane passes run 16–36 (FIMR…AGII), 347–367 (LMMA…NIPA), 369–389 (IIPG…MVFL), 396–416 (LTLM…IVVI), 440–460 (IGFT…PLLF), 472–492 (FAIT…TLTP), 537–557 (WLTL…WVFI), 863–883 (LGST…VLGI), 888–908 (FIHP…ALLA), 911–931 (IAGS…IGIV), 968–988 (ILMT…STGV), and 998–1018 (IGMV…TPVI).

It belongs to the resistance-nodulation-cell division (RND) (TC 2.A.6) family. MdtB subfamily. Part of a tripartite efflux system composed of MdtA, MdtB and MdtC. MdtB forms a heteromultimer with MdtC.

The protein resides in the cell inner membrane. In Shigella boydii serotype 4 (strain Sb227), this protein is Multidrug resistance protein MdtB.